The primary structure comprises 1136 residues: Nitric oxide synthase, inducible (1136 aa).

Zn(2+) is bound by residues C107 and C112. C197 is a binding site for heme b. L-arginine is bound by residues Q260, W369, Y370, and E374. Residues R378, V459, W460, and F473 each contribute to the (6R)-L-erythro-5,6,7,8-tetrahydrobiopterin site. Y488 contributes to the heme b binding site. The segment at 512-532 (LSILAKAVLLASLLLQKTMAA) is calmodulin-binding. In terms of domain architecture, Flavodoxin-like spans 536–674 (VTVIYATETG…AFRTWAVTAF (139 aa)). FMN-binding residues include T542, E543, T544, K546, S547, S588, T589, S625, C632, E658, and Q662. An FAD-binding FR-type domain is found at 727 to 967 (KNVIPMKLKF…VRSADGFRLP (241 aa)). Residue R747 participates in NADP(+) binding. Positions 769, 903, 905, 906, 921, 923, 927, 940, 941, and 942 each coordinate FAD. Positions 981, 1014, 1043, 1044, 1050, 1052, 1054, and 1087 each coordinate NADP(+).

Belongs to the NOS family. In terms of assembly, homodimer. Requires heme b as cofactor. It depends on FAD as a cofactor. FMN is required as a cofactor. (6R)-L-erythro-5,6,7,8-tetrahydrobiopterin serves as cofactor.

The protein localises to the cytoplasm. Its subcellular location is the cytosol. It catalyses the reaction 2 L-arginine + 3 NADPH + 4 O2 + H(+) = 2 L-citrulline + 2 nitric oxide + 3 NADP(+) + 4 H2O. With respect to regulation, not stimulated by calcium/calmodulin. Its function is as follows. Produces nitric oxide (NO) which is a messenger molecule with diverse functions throughout the body. NO may serve as both a paracrine and autocrine signal for modulating osteoclast bone resorption. Also has nitrosylase activity and mediates cysteine S-nitrosylation of cytoplasmic target proteins such COX2. The sequence is that of Nitric oxide synthase, inducible (NOS2) from Gallus gallus (Chicken).